Here is a 114-residue protein sequence, read N- to C-terminus: MRTSSLVLFAAVAVFGAACTAAAGDESWKTIDANDRHVQDVALWAVAETDWASATGGLTLNTVDGAEKRFEAGVNYYRLTLEASSRVVAKYLRFQAVVYEEGDEHKLVSFVPIH.

A signal peptide spans 1–23 (MRTSSLVLFAAVAVFGAACTAAA).

Belongs to the cystatin family. Phytocystatin subfamily.

The protein localises to the secreted. Specific inhibitor of cysteine proteinases. Probably involved in the regulation of endogenous processes and in defense against pests and pathogens. The sequence is that of Putative cysteine proteinase inhibitor 9 from Oryza sativa subsp. japonica (Rice).